A 217-amino-acid chain; its full sequence is tRNA (guanine-N(7)-)-methyltransferase (217 aa).

E43, D68, N101, and N123 together coordinate S-adenosyl-L-methionine. K127 provides a ligand contact to substrate. An interaction with RNA region spans residues 129-134 (KHNKRR). Substrate contacts are provided by residues D159 and 196 to 199 (TEYE).

The protein belongs to the class I-like SAM-binding methyltransferase superfamily. TrmB family.

The catalysed reaction is guanosine(46) in tRNA + S-adenosyl-L-methionine = N(7)-methylguanosine(46) in tRNA + S-adenosyl-L-homocysteine. Its pathway is tRNA modification; N(7)-methylguanine-tRNA biosynthesis. In terms of biological role, catalyzes the formation of N(7)-methylguanine at position 46 (m7G46) in tRNA. The chain is tRNA (guanine-N(7)-)-methyltransferase from Clostridium botulinum (strain Okra / Type B1).